The sequence spans 548 residues: Membrane protein insertase YidC (548 aa).

A helical transmembrane segment spans residues 6–26 (NLLVIALLFVSFMIWQAWEQD). The segment at 28–56 (NPQPQTQQTTQTTTTAAGSAADQGVPASG) is disordered. The segment covering 29 to 42 (PQPQTQQTTQTTTT) has biased composition (low complexity). A run of 4 helical transmembrane segments spans residues 350 to 370 (FVGN…GIMY), 424 to 444 (FPLI…MGSI), 458 to 478 (LSAQ…MFFI), and 499 to 519 (PVIF…YYIV).

This sequence belongs to the OXA1/ALB3/YidC family. Type 1 subfamily. As to quaternary structure, interacts with the Sec translocase complex via SecD. Specifically interacts with transmembrane segments of nascent integral membrane proteins during membrane integration.

The protein resides in the cell inner membrane. In terms of biological role, required for the insertion and/or proper folding and/or complex formation of integral membrane proteins into the membrane. Involved in integration of membrane proteins that insert both dependently and independently of the Sec translocase complex, as well as at least some lipoproteins. Aids folding of multispanning membrane proteins. This Salmonella newport (strain SL254) protein is Membrane protein insertase YidC.